The primary structure comprises 313 residues: Proline iminopeptidase (313 aa).

Residues 35-298 (KPVVILHGGP…TPGAGHSAFE (264 aa)) enclose the AB hydrolase-1 domain. Ser110 functions as the Nucleophile in the catalytic mechanism. Asp266 is a catalytic residue. His294 (proton donor) is an active-site residue.

Belongs to the peptidase S33 family.

Its subcellular location is the cytoplasm. The enzyme catalyses Release of N-terminal proline from a peptide.. Specifically catalyzes the removal of N-terminal proline residues from peptides. This chain is Proline iminopeptidase (pip), found in Xylella fastidiosa (strain 9a5c).